The following is a 222-amino-acid chain: MNSSVLGKPLLGKGMSESLTGTLDAPFPEYQKPPADPMSVLHNWLERARRVGIREPRALALATADSQGRPSTRIVVISEISDTGVLFSTHAGSQKGRELTENPWASGTLYWRETSQQIILNGQAVRMPDAKADEAWLKRPYATHPMSSVSRQSEELKDVQAMRNAARELAEVQGPLPRPEGYCVFELRLESLEFWGNGEERLHERLRYDRSAEGWKHRRLQP.

Serine 18 lines the substrate pocket. FMN is bound by residues 73–76 (RIVV) and 88–89 (ST). Histidine 90 lines the substrate pocket. FMN contacts are provided by residues 94-95 (QK) and glutamine 117. Arginine 139 and serine 147 together coordinate substrate. Residues 152–153 (QS) and arginine 205 contribute to the FMN site.

This sequence belongs to the pyridoxamine 5'-phosphate oxidase family. FMN serves as cofactor.

It catalyses the reaction (1R,6R)-1,4,5,5a,6,9-hexahydrophenazine-1,6-dicarboxylate + O2 = (1R,10aS)-1,4,10,10a-tetrahydrophenazine-1,6-dicarboxylate + H2O2. The enzyme catalyses (1R,10aS)-1,4,10,10a-tetrahydrophenazine-1,6-dicarboxylate + O2 = (5aS)-5,5a-dihydrophenazine-1,6-dicarboxylate + H2O2. It carries out the reaction (1R,10aS)-1,4,10,10a-tetrahydrophenazine-1-carboxylate + O2 = (10aS)-10,10a-dihydrophenazine-1-carboxylate + H2O2. The catalysed reaction is (1R)-1,4,5,10-tetrahydrophenazine-1-carboxylate + O2 = (10aS)-10,10a-dihydrophenazine-1-carboxylate + H2O2. It participates in antibiotic biosynthesis; phenazine biosynthesis. Involved in the biosynthesis of the antibiotic phenazine, a nitrogen-containing heterocyclic molecule having important roles in virulence, competition and biological control. Catalyzes several oxidations in the terminal steps of core phenazine biosynthesis. It oxidizes both hexahydrophenazine-1,6-dicarboxylic acid (HHPDC) and tetrahydrophenazine-1-carboxylic acid (THPCA) and thereby contributes to the generation of both phenazine-1,6-dicarboxylic acid (PDC) and phenazine-1-carboxylic acid (PCA). The protein is Dihydrophenazinedicarboxylate synthase of Pseudomonas chlororaphis (Pseudomonas aureofaciens).